Reading from the N-terminus, the 510-residue chain is D-alanine--D-alanyl carrier protein ligase (510 aa).

157 to 158 (TS) provides a ligand contact to ATP. Asp-202 contributes to the D-alanine binding site. An ATP-binding site is contributed by 297-302 (NTYGPT). Val-306 serves as a coordination point for D-alanine. ATP-binding residues include Asp-389 and Lys-498. Position 498 (Lys-498) interacts with D-alanine.

The protein belongs to the ATP-dependent AMP-binding enzyme family. DltA subfamily.

It is found in the cytoplasm. The enzyme catalyses holo-[D-alanyl-carrier protein] + D-alanine + ATP = D-alanyl-[D-alanyl-carrier protein] + AMP + diphosphate. The protein operates within cell wall biogenesis; lipoteichoic acid biosynthesis. In terms of biological role, catalyzes the first step in the D-alanylation of lipoteichoic acid (LTA), the activation of D-alanine and its transfer onto the D-alanyl carrier protein (Dcp) DltC. In an ATP-dependent two-step reaction, forms a high energy D-alanyl-AMP intermediate, followed by transfer of the D-alanyl residue as a thiol ester to the phosphopantheinyl prosthetic group of the Dcp. D-alanylation of LTA plays an important role in modulating the properties of the cell wall in Gram-positive bacteria, influencing the net charge of the cell wall. This chain is D-alanine--D-alanyl carrier protein ligase, found in Listeria monocytogenes serovar 1/2a (strain ATCC BAA-679 / EGD-e).